The sequence spans 531 residues: Membrane protein insertase YidC (531 aa).

A run of 4 helical transmembrane segments spans residues 5 to 25 (ALIA…LFSP), 343 to 363 (GNYG…FYPL), 415 to 435 (LPML…MFSI), and 489 to 509 (PVVF…YWLV).

Belongs to the OXA1/ALB3/YidC family. Type 1 subfamily. As to quaternary structure, interacts with the Sec translocase complex via SecD. Specifically interacts with transmembrane segments of nascent integral membrane proteins during membrane integration.

Its subcellular location is the cell inner membrane. In terms of biological role, required for the insertion and/or proper folding and/or complex formation of integral membrane proteins into the membrane. Involved in integration of membrane proteins that insert both dependently and independently of the Sec translocase complex, as well as at least some lipoproteins. Aids folding of multispanning membrane proteins. This Geobacter sulfurreducens (strain ATCC 51573 / DSM 12127 / PCA) protein is Membrane protein insertase YidC.